The chain runs to 338 residues: Ketol-acid reductoisomerase (NADP(+)) (338 aa).

Residues 1–181 (MKVFYDKDAD…GGGRAGIIET (181 aa)) enclose the KARI N-terminal Rossmann domain. Residues 24–27 (YGSQ), Arg47, and Ser52 contribute to the NADP(+) site. His107 is a catalytic residue. Residue Gly133 coordinates NADP(+). Residues 182-327 (NFREETETDL…GKLRAMMPWI (146 aa)) form the KARI C-terminal knotted domain. Residues Asp190, Glu194, Glu226, and Glu230 each coordinate Mg(2+). Ser251 contributes to the substrate binding site.

Belongs to the ketol-acid reductoisomerase family. The cofactor is Mg(2+).

The catalysed reaction is (2R)-2,3-dihydroxy-3-methylbutanoate + NADP(+) = (2S)-2-acetolactate + NADPH + H(+). It catalyses the reaction (2R,3R)-2,3-dihydroxy-3-methylpentanoate + NADP(+) = (S)-2-ethyl-2-hydroxy-3-oxobutanoate + NADPH + H(+). The protein operates within amino-acid biosynthesis; L-isoleucine biosynthesis; L-isoleucine from 2-oxobutanoate: step 2/4. It participates in amino-acid biosynthesis; L-valine biosynthesis; L-valine from pyruvate: step 2/4. Involved in the biosynthesis of branched-chain amino acids (BCAA). Catalyzes an alkyl-migration followed by a ketol-acid reduction of (S)-2-acetolactate (S2AL) to yield (R)-2,3-dihydroxy-isovalerate. In the isomerase reaction, S2AL is rearranged via a Mg-dependent methyl migration to produce 3-hydroxy-3-methyl-2-ketobutyrate (HMKB). In the reductase reaction, this 2-ketoacid undergoes a metal-dependent reduction by NADPH to yield (R)-2,3-dihydroxy-isovalerate. In Cupriavidus metallidurans (strain ATCC 43123 / DSM 2839 / NBRC 102507 / CH34) (Ralstonia metallidurans), this protein is Ketol-acid reductoisomerase (NADP(+)).